The primary structure comprises 705 residues: Elongation factor G (705 aa).

The 283-residue stretch at 8 to 290 (ERYRNFGIMA…GVVHLLPSPA (283 aa)) folds into the tr-type G domain. Residues 17–24 (AHIDAGKT), 88–92 (DTPGH), and 142–145 (NKMD) contribute to the GTP site. Residues 290–309 (ADRPPVQGIDEDEKEDTRAA) are disordered.

This sequence belongs to the TRAFAC class translation factor GTPase superfamily. Classic translation factor GTPase family. EF-G/EF-2 subfamily.

It localises to the cytoplasm. Functionally, catalyzes the GTP-dependent ribosomal translocation step during translation elongation. During this step, the ribosome changes from the pre-translocational (PRE) to the post-translocational (POST) state as the newly formed A-site-bound peptidyl-tRNA and P-site-bound deacylated tRNA move to the P and E sites, respectively. Catalyzes the coordinated movement of the two tRNA molecules, the mRNA and conformational changes in the ribosome. The chain is Elongation factor G from Xanthomonas euvesicatoria pv. vesicatoria (strain 85-10) (Xanthomonas campestris pv. vesicatoria).